We begin with the raw amino-acid sequence, 292 residues long: Feruloyl esterase B (292 aa).

The signal sequence occupies residues 1–18 (MLPRTLLGLALTAATGLC). 4 N-linked (GlcNAc...) asparagine glycosylation sites follow: Asn88, Asn117, Asn179, and Asn245.

The protein belongs to the carbohydrate esterase 1 (CE1) family. Feruloyl esterase type B subfamily.

It localises to the secreted. It catalyses the reaction feruloyl-polysaccharide + H2O = ferulate + polysaccharide.. In terms of biological role, involved in degradation of plant cell walls. Hydrolyzes of the feruloyl-arabinose ester bond in arabinoxylans as well as the feruloyl-galactose and feruloyl-arabinose ester bonds in pectin. The sequence is that of Feruloyl esterase B (fae-1) from Neurospora crassa (strain ATCC 24698 / 74-OR23-1A / CBS 708.71 / DSM 1257 / FGSC 987).